Reading from the N-terminus, the 204-residue chain is Large ribosomal subunit protein uL4 (204 aa).

The tract at residues 53–77 (ISDVSGTTAKPYSQKRTGRARQGSL) is disordered. The segment covering 56 to 67 (VSGTTAKPYSQK) has biased composition (polar residues).

The protein belongs to the universal ribosomal protein uL4 family. As to quaternary structure, part of the 50S ribosomal subunit.

Functionally, one of the primary rRNA binding proteins, this protein initially binds near the 5'-end of the 23S rRNA. It is important during the early stages of 50S assembly. It makes multiple contacts with different domains of the 23S rRNA in the assembled 50S subunit and ribosome. Its function is as follows. Forms part of the polypeptide exit tunnel. This is Large ribosomal subunit protein uL4 from Wolbachia sp. subsp. Brugia malayi (strain TRS).